The following is a 68-amino-acid chain: Protein SlyX homolog (68 aa).

The protein belongs to the SlyX family.

In Brucella abortus (strain S19), this protein is Protein SlyX homolog.